The sequence spans 317 residues: Pantothenate kinase (317 aa).

99 to 106 (GSVSVGKS) serves as a coordination point for ATP.

The protein belongs to the prokaryotic pantothenate kinase family.

The protein resides in the cytoplasm. The catalysed reaction is (R)-pantothenate + ATP = (R)-4'-phosphopantothenate + ADP + H(+). Its pathway is cofactor biosynthesis; coenzyme A biosynthesis; CoA from (R)-pantothenate: step 1/5. This chain is Pantothenate kinase, found in Histophilus somni (strain 2336) (Haemophilus somnus).